Here is a 284-residue protein sequence, read N- to C-terminus: Acetyl-coenzyme A carboxylase carboxyl transferase subunit beta (284 aa).

Residues M25–A284 enclose the CoA carboxyltransferase N-terminal domain. Residues C29, C32, C48, and C51 each contribute to the Zn(2+) site. Residues C29–C51 form a C4-type zinc finger.

It belongs to the AccD/PCCB family. In terms of assembly, acetyl-CoA carboxylase is a heterohexamer composed of biotin carboxyl carrier protein (AccB), biotin carboxylase (AccC) and two subunits each of ACCase subunit alpha (AccA) and ACCase subunit beta (AccD). The cofactor is Zn(2+).

The protein resides in the cytoplasm. The enzyme catalyses N(6)-carboxybiotinyl-L-lysyl-[protein] + acetyl-CoA = N(6)-biotinyl-L-lysyl-[protein] + malonyl-CoA. Its pathway is lipid metabolism; malonyl-CoA biosynthesis; malonyl-CoA from acetyl-CoA: step 1/1. Component of the acetyl coenzyme A carboxylase (ACC) complex. Biotin carboxylase (BC) catalyzes the carboxylation of biotin on its carrier protein (BCCP) and then the CO(2) group is transferred by the transcarboxylase to acetyl-CoA to form malonyl-CoA. In Pelobacter propionicus (strain DSM 2379 / NBRC 103807 / OttBd1), this protein is Acetyl-coenzyme A carboxylase carboxyl transferase subunit beta.